The sequence spans 321 residues: WD repeat-containing protein VIP3 (321 aa).

WD repeat units lie at residues 12-55, 58-97, 100-140, 156-195, 198-238, 241-280, and 283-319; these read AHED…LVRT, GHSL…TIAV, APPS…LIST, SSKK…LLHQ, GHNM…LLGS, GHTS…AIQT, and NHND…SLYD.

Component of the nuclear PAF1 complex (PAF1C), which consists of VIP2/ELF7/PAF1, VIP3/SKI8/WDR61, VIP4/LEO1, VIP5/RTF1, VIP6/ELF8/CTR9 and CDC73. Component of the cytoplasmic SKI complex, which consists of SKI2, SKI3 and VIP3/SKI8. Interacts with VIP4 and VIP6.

It localises to the nucleus. Its subcellular location is the cytoplasm. Its function is as follows. Component of the PAF1 complex (PAF1C) which is involved in histone modifications such as methylation on histone H3 'Lys-4' (H3K4me3). Involved in regulation of flowering time. Required for the expression of the flowering repressor and MADS box gene FLC. Required for histone H3 trimethylation on 'Lys-4' (H3K4me3) and histone dimethylation on 'Lys-36' (H3K36me2) at the FLC locus. Prevents trimethylation on 'Lys-27' (H3K27me3) at the same locus. Not required for meiotic recombination or progression. Component of the SKI complex which is thought to be involved in exosome-mediated RNA decay and associates with transcriptionally active genes in a manner dependent on PAF1 complex (PAF1C). Required for proper progression of cell differentiation process. This is WD repeat-containing protein VIP3 from Arabidopsis thaliana (Mouse-ear cress).